We begin with the raw amino-acid sequence, 170 residues long: Bacilliredoxin SRU_1493 (170 aa).

The interval 140–170 (CGDEEPPADAPSRPDPSSSGEGLPSTFQSIT) is disordered.

It belongs to the bacilliredoxin family.

The protein is Bacilliredoxin SRU_1493 of Salinibacter ruber (strain DSM 13855 / M31).